Consider the following 120-residue polypeptide: Large ribosomal subunit protein uL18 (120 aa).

It belongs to the universal ribosomal protein uL18 family. As to quaternary structure, part of the 50S ribosomal subunit; part of the 5S rRNA/L5/L18/L25 subcomplex. Contacts the 5S and 23S rRNAs.

Its function is as follows. This is one of the proteins that bind and probably mediate the attachment of the 5S RNA into the large ribosomal subunit, where it forms part of the central protuberance. This Picosynechococcus sp. (strain ATCC 27264 / PCC 7002 / PR-6) (Agmenellum quadruplicatum) protein is Large ribosomal subunit protein uL18.